We begin with the raw amino-acid sequence, 92 residues long: Sec-independent protein translocase protein TatA (92 aa).

The helical transmembrane segment at 1 to 21 threads the bilayer; it reads MGIFDWKHWIVILVVVVLVFG. The segment at 44-92 is disordered; that stretch reads NDDEKPADPVVNPVPPAQPVHPQATQPITERRTFDVQAEKVEEPTRKDS. Basic and acidic residues predominate over residues 72–92; sequence TERRTFDVQAEKVEEPTRKDS.

It belongs to the TatA/E family. In terms of assembly, the Tat system comprises two distinct complexes: a TatABC complex, containing multiple copies of TatA, TatB and TatC subunits, and a separate TatA complex, containing only TatA subunits. Substrates initially bind to the TatABC complex, which probably triggers association of the separate TatA complex to form the active translocon.

It is found in the cell inner membrane. Part of the twin-arginine translocation (Tat) system that transports large folded proteins containing a characteristic twin-arginine motif in their signal peptide across membranes. TatA could form the protein-conducting channel of the Tat system. The protein is Sec-independent protein translocase protein TatA of Pseudomonas fluorescens (strain SBW25).